Here is a 76-residue protein sequence, read N- to C-terminus: UPF0291 protein BC_1827 (76 aa).

The protein belongs to the UPF0291 family.

The protein localises to the cytoplasm. The sequence is that of UPF0291 protein BC_1827 from Bacillus cereus (strain ATCC 14579 / DSM 31 / CCUG 7414 / JCM 2152 / NBRC 15305 / NCIMB 9373 / NCTC 2599 / NRRL B-3711).